The following is a 678-amino-acid chain: Glutamate--cysteine ligase (678 aa).

The protein belongs to the glutamate--cysteine ligase type 3 family.

It catalyses the reaction L-cysteine + L-glutamate + ATP = gamma-L-glutamyl-L-cysteine + ADP + phosphate + H(+). Its pathway is sulfur metabolism; glutathione biosynthesis; glutathione from L-cysteine and L-glutamate: step 1/2. Feedback inhibition by glutathione. In terms of biological role, catalyzes the ATP-dependent condensation of cysteine and glutamate to form the dipeptide gamma-glutamylcysteine (gamma-GC), the first and rate-limiting step in the production of glutathione (GSH). This is Glutamate--cysteine ligase (GSH1) from Saccharomyces cerevisiae (strain ATCC 204508 / S288c) (Baker's yeast).